Consider the following 288-residue polypeptide: Polyamine aminopropyltransferase (288 aa).

In terms of domain architecture, PABS spans 9–238; it reads ETLHDQFGQY…GIMTFAWATD (230 aa). Glutamine 33 lines the S-methyl-5'-thioadenosine pocket. 2 residues coordinate spermidine: histidine 64 and aspartate 88. Residues glutamate 108 and 140–141 each bind S-methyl-5'-thioadenosine; that span reads DG. Aspartate 158 serves as the catalytic Proton acceptor. 158 to 161 contacts spermidine; sequence DCTD. Proline 165 lines the S-methyl-5'-thioadenosine pocket.

Belongs to the spermidine/spermine synthase family. As to quaternary structure, homodimer or homotetramer.

It is found in the cytoplasm. The catalysed reaction is S-adenosyl 3-(methylsulfanyl)propylamine + putrescine = S-methyl-5'-thioadenosine + spermidine + H(+). The protein operates within amine and polyamine biosynthesis; spermidine biosynthesis; spermidine from putrescine: step 1/1. Catalyzes the irreversible transfer of a propylamine group from the amino donor S-adenosylmethioninamine (decarboxy-AdoMet) to putrescine (1,4-diaminobutane) to yield spermidine. This is Polyamine aminopropyltransferase from Shigella boydii serotype 4 (strain Sb227).